A 145-amino-acid polypeptide reads, in one-letter code: 3-dehydroquinate dehydratase (145 aa).

Tyrosine 24 (proton acceptor) is an active-site residue. Substrate-binding residues include asparagine 75, histidine 81, and aspartate 88. Histidine 101 serves as the catalytic Proton donor. Residues 102–103 and arginine 112 each bind substrate; that span reads IS.

This sequence belongs to the type-II 3-dehydroquinase family. As to quaternary structure, homododecamer.

The enzyme catalyses 3-dehydroquinate = 3-dehydroshikimate + H2O. The protein operates within metabolic intermediate biosynthesis; chorismate biosynthesis; chorismate from D-erythrose 4-phosphate and phosphoenolpyruvate: step 3/7. Functionally, catalyzes a trans-dehydration via an enolate intermediate. The chain is 3-dehydroquinate dehydratase from Rhizobium johnstonii (strain DSM 114642 / LMG 32736 / 3841) (Rhizobium leguminosarum bv. viciae).